A 663-amino-acid chain; its full sequence is Putative ankyrin repeat protein R219 (663 aa).

5 ANK repeats span residues 91 to 118, 119 to 148, 200 to 229, 258 to 288, and 322 to 351; these read FRIK…GYKV, DFDS…KLSS, ANQQ…KDGT, DWHV…KINP, and YFSH…GITV.

The chain is Putative ankyrin repeat protein R219 from Acanthamoeba polyphaga mimivirus (APMV).